A 247-amino-acid chain; its full sequence is Triosephosphate isomerase (247 aa).

Residue 9–11 (NWK) participates in substrate binding. His-94 functions as the Electrophile in the catalytic mechanism. Glu-165 functions as the Proton acceptor in the catalytic mechanism. Substrate contacts are provided by residues Gly-171, Ser-209, and 230-231 (GG).

This sequence belongs to the triosephosphate isomerase family. As to quaternary structure, homodimer.

The protein localises to the cytoplasm. The enzyme catalyses D-glyceraldehyde 3-phosphate = dihydroxyacetone phosphate. It functions in the pathway carbohydrate biosynthesis; gluconeogenesis. Its pathway is carbohydrate degradation; glycolysis; D-glyceraldehyde 3-phosphate from glycerone phosphate: step 1/1. Its function is as follows. Involved in the gluconeogenesis. Catalyzes stereospecifically the conversion of dihydroxyacetone phosphate (DHAP) to D-glyceraldehyde-3-phosphate (G3P). The polypeptide is Triosephosphate isomerase (Albidiferax ferrireducens (strain ATCC BAA-621 / DSM 15236 / T118) (Rhodoferax ferrireducens)).